Consider the following 171-residue polypeptide: UPF0398 protein spyM18_1659 (171 aa).

This sequence belongs to the UPF0398 family.

In Streptococcus pyogenes serotype M18 (strain MGAS8232), this protein is UPF0398 protein spyM18_1659.